The chain runs to 222 residues: MLPSLIQPCSWILLLLLVNSSLLWKNVASLPMCAMRNDRCFMFFEDTFELAGSLSHNISIEVSELFTEFEKHYSNVPGLRDKSPMRCHTSFLPTPENKEQARHIRYEALLKSGDMILDAWENPLDYLVSELSTIKNVPDIIISKATDIKKKINAVQNGVNALMSTMNGDEENKNPAWFLQSDNEDARIRSSYGMISCLDNDFKKVDIYLNILKCYMLKIDNC.

A signal peptide spans 1–29 (MLPSLIQPCSWILLLLLVNSSLLWKNVAS). A disulfide bond links cysteine 33 and cysteine 40. N-linked (GlcNAc...) asparagine glycosylation is present at asparagine 57. 2 disulfide bridges follow: cysteine 87-cysteine 197 and cysteine 214-cysteine 222.

This sequence belongs to the somatotropin/prolactin family. In terms of processing, N-glycosylated and sialylated. As to expression, expressed in placenta (at protein level). Expressed in the tail hair follicle, with highest expression detected in the keratinocytes of the outer root sheath. Expressed in ear skin with lesser amounts in small intestine. Not detected in brain at 18 dpc, postnatal day 25 or postnatal day 55.

It localises to the secreted. The sequence is that of Prolactin-2C5 from Mus musculus (Mouse).